Reading from the N-terminus, the 316-residue chain is Protein lifeguard 2 (316 aa).

A disordered region spans residues 1 to 46; sequence MTQGKLSVANKAPGTEGQQQANGEKKETPAVPSAPPSYEEATSGEG. 3 consecutive transmembrane segments (helical) span residues 106 to 126, 138 to 158, and 165 to 185; these read VYTI…LFTF, PGWY…LACC, and FPWN…LTGM. N-linked (GlcNAc...) asparagine glycosylation is present at Asn-191. 4 helical membrane-spanning segments follow: residues 194 to 214, 225 to 245, 251 to 271, and 290 to 310; these read SVLL…VFSF, GVLF…AILL, PWLH…FLAF, and IFGA…FLQL.

This sequence belongs to the BI1 family. LFG subfamily. As to quaternary structure, interacts with FAS/TNFRSF6 and BAX.

It is found in the cell membrane. It localises to the membrane raft. Its subcellular location is the postsynaptic cell membrane. Functionally, antiapoptotic protein which protects cells uniquely from Fas-induced apoptosis. Regulates Fas-mediated apoptosis in neurons by interfering with caspase-8 activation. Plays a role in cerebellar development by affecting cerebellar size, internal granular layer (IGL) thickness, and Purkinje cell (PC) development. The protein is Protein lifeguard 2 (FAIM2) of Bos taurus (Bovine).